We begin with the raw amino-acid sequence, 266 residues long: Small ribosomal subunit protein eS1 (266 aa).

The segment at Gly236–Val266 is disordered. Basic and acidic residues predominate over residues Thr244–Gly257.

It belongs to the eukaryotic ribosomal protein eS1 family. Component of the small ribosomal subunit. Mature ribosomes consist of a small (40S) and a large (60S) subunit. The 40S subunit contains about 33 different proteins and 1 molecule of RNA (18S). The 60S subunit contains about 49 different proteins and 3 molecules of RNA (28S, 5.8S and 5S). Part of the small subunit (SSU) processome, composed of more than 70 proteins and the RNA chaperone small nucleolar RNA (snoRNA) U3.

Its subcellular location is the cytoplasm. It is found in the nucleus. It localises to the nucleolus. Its function is as follows. Component of the small ribosomal subunit. The ribosome is a large ribonucleoprotein complex responsible for the synthesis of proteins in the cell. Part of the small subunit (SSU) processome, first precursor of the small eukaryotic ribosomal subunit. During the assembly of the SSU processome in the nucleolus, many ribosome biogenesis factors, an RNA chaperone and ribosomal proteins associate with the nascent pre-rRNA and work in concert to generate RNA folding, modifications, rearrangements and cleavage as well as targeted degradation of pre-ribosomal RNA by the RNA exosome. May play a role during erythropoiesis. The sequence is that of Small ribosomal subunit protein eS1 (rps3a) from Tetraodon nigroviridis (Spotted green pufferfish).